The primary structure comprises 515 residues: 2-isopropylmalate synthase (515 aa).

One can recognise a Pyruvate carboxyltransferase domain in the interval 5–267 (VIIFDTTLRD…STGIKHEEIH (263 aa)). Mn(2+)-binding residues include Asp-14, His-202, His-204, and Asn-238. The tract at residues 392–515 (KLNYLSVQSG…EMKQKKIATV (124 aa)) is regulatory domain.

This sequence belongs to the alpha-IPM synthase/homocitrate synthase family. LeuA type 1 subfamily. Homodimer. Mn(2+) serves as cofactor.

It localises to the cytoplasm. The catalysed reaction is 3-methyl-2-oxobutanoate + acetyl-CoA + H2O = (2S)-2-isopropylmalate + CoA + H(+). It functions in the pathway amino-acid biosynthesis; L-leucine biosynthesis; L-leucine from 3-methyl-2-oxobutanoate: step 1/4. Its function is as follows. Catalyzes the condensation of the acetyl group of acetyl-CoA with 3-methyl-2-oxobutanoate (2-ketoisovalerate) to form 3-carboxy-3-hydroxy-4-methylpentanoate (2-isopropylmalate). The polypeptide is 2-isopropylmalate synthase (Vibrio parahaemolyticus serotype O3:K6 (strain RIMD 2210633)).